We begin with the raw amino-acid sequence, 475 residues long: Ankyrin repeat, SAM and basic leucine zipper domain-containing protein 1 (475 aa).

Residues 1-23 (MAAARFRGLAVAGGGESSESEDD) are disordered. Phosphoserine is present on residues Ser-17, Ser-18, and Ser-20. 6 ANK repeats span residues 45–74 (EKNE…SVDS), 78–107 (YGWT…KASF), 110–144 (DKQT…DPNV), 148–177 (RLMT…EVNT), 181–210 (NGYT…NKML), and 214–243 (DGKT…PLEG). The region spanning 272 to 334 (SYTAFGDLEI…KILAALKELE (63 aa)) is the SAM domain.

As to quaternary structure, interacts with DDX4, PIWIL1, RANBP9 and TDRD1.

Its subcellular location is the cytoplasm. Plays a central role during spermatogenesis by repressing transposable elements and preventing their mobilization, which is essential for the germline integrity. Acts via the piRNA metabolic process, which mediates the repression of transposable elements during meiosis by forming complexes composed of piRNAs and Piwi proteins and governs the methylation and subsequent repression of transposons. Its association with pi-bodies suggests a participation in the primary piRNAs metabolic process. Required prior to the pachytene stage to facilitate the production of multiple types of piRNAs, including those associated with repeats involved in the regulation of retrotransposons. May act by mediating protein-protein interactions during germ cell maturation. This chain is Ankyrin repeat, SAM and basic leucine zipper domain-containing protein 1 (ASZ1), found in Equus caballus (Horse).